The following is a 233-amino-acid chain: Glyceraldehyde-3-phosphate dehydrogenase A, chloroplastic (233 aa).

D-glyceraldehyde 3-phosphate-binding positions include 49 to 51 (SCT), T80, R95, 108 to 109 (TG), and R131. The active-site Nucleophile is the C50. N213 serves as a coordination point for NADP(+).

It belongs to the glyceraldehyde-3-phosphate dehydrogenase family. Tetramer of either four A chains (GAPDH 2) or two A and two B chains (GAPDH 1).

The protein resides in the plastid. It localises to the chloroplast. It catalyses the reaction D-glyceraldehyde 3-phosphate + phosphate + NADP(+) = (2R)-3-phospho-glyceroyl phosphate + NADPH + H(+). It participates in carbohydrate biosynthesis; Calvin cycle. In Sinapis alba (White mustard), this protein is Glyceraldehyde-3-phosphate dehydrogenase A, chloroplastic (GAPA).